Here is a 184-residue protein sequence, read N- to C-terminus: NADH-quinone oxidoreductase subunit B (184 aa).

Positions 63, 64, 128, and 158 each coordinate [4Fe-4S] cluster.

This sequence belongs to the complex I 20 kDa subunit family. As to quaternary structure, NDH-1 is composed of 14 different subunits. Subunits NuoB, C, D, E, F, and G constitute the peripheral sector of the complex. [4Fe-4S] cluster is required as a cofactor.

The protein localises to the cell inner membrane. The enzyme catalyses a quinone + NADH + 5 H(+)(in) = a quinol + NAD(+) + 4 H(+)(out). Its function is as follows. NDH-1 shuttles electrons from NADH, via FMN and iron-sulfur (Fe-S) centers, to quinones in the respiratory chain. The immediate electron acceptor for the enzyme in this species is believed to be ubiquinone. Couples the redox reaction to proton translocation (for every two electrons transferred, four hydrogen ions are translocated across the cytoplasmic membrane), and thus conserves the redox energy in a proton gradient. The chain is NADH-quinone oxidoreductase subunit B from Xylella fastidiosa (strain M23).